Here is a 227-residue protein sequence, read N- to C-terminus: Ornithine decarboxylase antizyme 1 (227 aa).

Belongs to the ODC antizyme family. Interacts with ODC1 and thereby sterically blocks ODC homodimerization. Forms a ternary complex with PSMB4 and OAZ1 before PSMB4 is incorporated into the 20S proteasome. Interacts with AZIN2; this interaction disrupts the interaction between the antizyme and ODC1. Interacts with FAM171A1.

Functionally, ornithine decarboxylase (ODC) antizyme protein that negatively regulates ODC activity and intracellular polyamine biosynthesis and uptake in response to increased intracellular polyamine levels. Binds to ODC monomers, inhibiting the assembly of the functional ODC homodimer, and targets the monomers for ubiquitin-independent proteolytic destruction by the 26S proteasome. Triggers ODC degradation by inducing the exposure of a cryptic proteasome-interacting surface of ODC. Stabilizes AZIN2 by interfering with its ubiquitination. Also inhibits cellular uptake of polyamines by inactivating the polyamine uptake transporter. SMAD1/OAZ1/PSMB4 complex mediates the degradation of the CREBBP/EP300 repressor SNIP1. Involved in the translocation of AZIN2 from ER-Golgi intermediate compartment (ERGIC) to the cytosol. This Rattus norvegicus (Rat) protein is Ornithine decarboxylase antizyme 1 (Oaz1).